The following is a 305-amino-acid chain: Putative beta-lactamase HcpD (305 aa).

The N-terminal stretch at 1 to 27 is a signal peptide; sequence MIKSWTKKWFLILFLMASCFGHLVATT. TPR repeat units follow at residues 28–61, 96–133, 168–205, and 240–277; these read GEKY…RMGV, HLAC…KGGV, GISC…KDGA, and GSGC…GFSG. Disulfide bonds link Cys55-Cys63, Cys91-Cys99, Cys127-Cys135, Cys163-Cys171, Cys199-Cys207, Cys235-Cys243, and Cys271-Cys279.

This sequence belongs to the hcp beta-lactamase family.

It localises to the secreted. It carries out the reaction a beta-lactam + H2O = a substituted beta-amino acid. In terms of biological role, may hydrolyze 6-aminopenicillinic acid and 7-aminocephalosporanic acid (ACA) derivatives. Binds to penicillin. The sequence is that of Putative beta-lactamase HcpD (hcpD) from Helicobacter pylori (strain J99 / ATCC 700824) (Campylobacter pylori J99).